Consider the following 38-residue polypeptide: Large ribosomal subunit protein bL36 (38 aa).

The protein belongs to the bacterial ribosomal protein bL36 family.

The chain is Large ribosomal subunit protein bL36 from Proteus mirabilis (strain HI4320).